The chain runs to 236 residues: Small ribosomal subunit protein uS2c (236 aa).

Belongs to the universal ribosomal protein uS2 family.

It localises to the plastid. The protein resides in the chloroplast. In Guizotia abyssinica (Niger), this protein is Small ribosomal subunit protein uS2c (rps2).